The chain runs to 442 residues: Syndecan-3 (442 aa).

Disordered regions lie at residues 1–24 (MKPGPPHRAGAAHGAGAGAGAAAG) and 57–87 (RPVDLEGSGDDDSFPDDELDDLYSGSGSGYF). The Extracellular portion of the chain corresponds to 1-387 (MKPGPPHRAG…SILERKEVLV (387 aa)). Residues 13-24 (HGAGAGAGAAAG) show a composition bias toward gly residues. Acidic residues predominate over residues 63-77 (GSGDDDSFPDDELDD). O-linked (Xyl...) (glycosaminoglycan) serine glycosylation is found at serine 80, serine 82, serine 84, and serine 91. An O-linked (GalNAc) serine; by GALNT13 glycan is attached at serine 108. Threonine 109 and threonine 110 each carry an O-linked (GalNAc) threonine; by GALNT13 glycan. 3 disordered regions span residues 150–173 (EEPSQRATTVSTTMATTAATSTGD), 225–326 (TTPE…ETTQ), and 340–367 (AAKASSPPGTLPKGARPGPGLLDNAIDS). Low complexity-rich tracts occupy residues 156–173 (ATTVSTTMATTAATSTGD), 225–238 (TTPEAPSPPTTAAV), and 275–286 (TLPLGTTAPGPT). Residue serine 160 is glycosylated (O-linked (GalNAc) serine; by GALNT13). O-linked (GalNAc) threonine; by GALNT13 glycosylation is found at threonine 161, threonine 162, and threonine 169. Residue serine 170 is glycosylated (O-linked (GalNAc) serine; by GALNT13). Threonine 171 carries O-linked (GalNAc) threonine; by GALNT13 glycosylation. The segment covering 288–299 (VAQTPTPETFLT) has biased composition (polar residues). Residues serine 314 and serine 367 are each glycosylated (O-linked (Xyl...) (glycosaminoglycan) serine). Residues 388 to 408 (AVIVGGVVGALFAAFLVTLLI) traverse the membrane as a helical segment. Residues tyrosine 409, tyrosine 419, tyrosine 431, and tyrosine 441 each carry the phosphotyrosine modification. The Cytoplasmic portion of the chain corresponds to 409-442 (YRMKKKDEGSYTLEEPKQASVTYQKPDKQEEFYA). Positions 419–442 (YTLEEPKQASVTYQKPDKQEEFYA) are disordered. Basic and acidic residues predominate over residues 433 to 442 (KPDKQEEFYA).

It belongs to the syndecan proteoglycan family. Interacts with TIAM1. Interacts with PTN (via heparan sulfate chains); this interaction mediates the neurite outgrowth-promoting signal from PTN to the cytoskeleton of growing neurites; this interaction mediates osteoblast recruitment. Interacts with MDK; this interaction induces SDC3 clustering; this interaction induces neuronal cell adhesion and neurite outgrowth. O-glycosylated within the Thr/Ser-rich region which could interact with lectin domains on other molecules. In terms of tissue distribution, expressed in the nervous system, the adrenal gland, and the spleen.

The protein localises to the cell membrane. In terms of biological role, cell surface proteoglycan that may bear heparan sulfate. May have a role in the organization of cell shape by affecting the actin cytoskeleton, possibly by transferring signals from the cell surface in a sugar-dependent mechanism. The chain is Syndecan-3 (SDC3) from Homo sapiens (Human).